The sequence spans 157 residues: Protein-export protein SecB (157 aa).

Belongs to the SecB family. Homotetramer, a dimer of dimers. One homotetramer interacts with 1 SecA dimer.

It localises to the cytoplasm. Functionally, one of the proteins required for the normal export of preproteins out of the cell cytoplasm. It is a molecular chaperone that binds to a subset of precursor proteins, maintaining them in a translocation-competent state. It also specifically binds to its receptor SecA. The chain is Protein-export protein SecB from Shewanella oneidensis (strain ATCC 700550 / JCM 31522 / CIP 106686 / LMG 19005 / NCIMB 14063 / MR-1).